Reading from the N-terminus, the 378-residue chain is Mannitol-1-phosphate 5-dehydrogenase (378 aa).

4 to 15 (SVHFGAGNIGRG) is a binding site for NAD(+).

Belongs to the mannitol dehydrogenase family.

It carries out the reaction D-mannitol 1-phosphate + NAD(+) = beta-D-fructose 6-phosphate + NADH + H(+). The polypeptide is Mannitol-1-phosphate 5-dehydrogenase (Streptococcus pneumoniae (strain JJA)).